Here is a 102-residue protein sequence, read N- to C-terminus: Protein RnfH (102 aa).

Belongs to the UPF0125 (RnfH) family.

The protein is Protein RnfH of Pseudomonas entomophila (strain L48).